The sequence spans 764 residues: Putative alpha-1,3-mannosyltransferase MNN13 (764 aa).

At 1-13 (MIKPILGTKKIRR) the chain is on the cytoplasmic side. Residues 14–34 (VICIIIGLFCILLLIGIFKHN) form a helical membrane-spanning segment. Residues 35-764 (STNSVNNEAS…YLGDVWVGKY (730 aa)) lie on the Lumenal side of the membrane. 2 N-linked (GlcNAc...) asparagine glycosylation sites follow: N45 and N204.

It belongs to the MNN1/MNT family.

It is found in the golgi apparatus membrane. It functions in the pathway protein modification; protein glycosylation. In terms of biological role, responsible for addition of the terminal mannose residues to the outer chain of core N-linked polysaccharides and to O-linked mannotriose. Implicated in late Golgi modifications. This Candida albicans (strain SC5314 / ATCC MYA-2876) (Yeast) protein is Putative alpha-1,3-mannosyltransferase MNN13 (MNN13).